A 662-amino-acid chain; its full sequence is Primary amine oxidase 2 (662 aa).

An N-terminal signal peptide occupies residues 1–22 (MSQLLLFTILVFSSVFVIGSLS). N-linked (GlcNAc...) asparagine glycosylation occurs at Asn154. Residue 321–332 (FFDCGEFGCGQY) participates in substrate binding. Asp323 (proton acceptor) is an active-site residue. Cys342 and Cys368 are oxidised to a cystine. A substrate-binding site is contributed by 405 to 410 (VGNYDY). The active-site Schiff-base intermediate with substrate; via topaquinone is Tyr408. Tyr408 bears the 2',4',5'-topaquinone mark. Residues His464 and His466 each contribute to the Cu cation site. Mn(2+)-binding residues include Asp473 and Asp475. Asn568 carries N-linked (GlcNAc...) asparagine glycosylation. Mn(2+) is bound by residues Asp602 and Ile603. Residue His613 coordinates Cu cation.

This sequence belongs to the copper/topaquinone oxidase family. As to quaternary structure, homodimer. Cu cation serves as cofactor. It depends on Mn(2+) as a cofactor. The cofactor is L-topaquinone. Post-translationally, topaquinone (TPQ) is generated by copper-dependent autoxidation of a specific tyrosyl residue.

It carries out the reaction a primary methyl amine + O2 + H2O = an aldehyde + H2O2 + NH4(+). The protein is Primary amine oxidase 2 of Arabidopsis thaliana (Mouse-ear cress).